The following is a 696-amino-acid chain: uncharacterized protein (696 aa).

The GGDEF domain occupies 293 to 426 (SVLGLVLLGF…GSRQYCFYEE (134 aa)). Residues 435–689 (RIQLEHALHQ…EITAFLAEGN (255 aa)) enclose the EAL domain.

This is an uncharacterized protein from Synechocystis sp. (strain ATCC 27184 / PCC 6803 / Kazusa).